The chain runs to 754 residues: 5-methyltetrahydropteroyltriglutamate--homocysteine methyltransferase (754 aa).

5-methyltetrahydropteroyltri-L-glutamate-binding positions include 15-18 (RELK) and lysine 114. Residues 430 to 432 (IGS) and glutamate 483 each bind L-homocysteine. L-methionine-binding positions include 430 to 432 (IGS) and glutamate 483. Residues 514 to 515 (RC) and tryptophan 560 each bind 5-methyltetrahydropteroyltri-L-glutamate. Aspartate 598 provides a ligand contact to L-homocysteine. Aspartate 598 serves as a coordination point for L-methionine. A 5-methyltetrahydropteroyltri-L-glutamate-binding site is contributed by glutamate 604. Zn(2+) is bound by residues histidine 641, cysteine 643, and glutamate 665. The active-site Proton donor is the histidine 694. Zn(2+) is bound at residue cysteine 726.

Belongs to the vitamin-B12 independent methionine synthase family. Zn(2+) serves as cofactor.

The enzyme catalyses 5-methyltetrahydropteroyltri-L-glutamate + L-homocysteine = tetrahydropteroyltri-L-glutamate + L-methionine. Its pathway is amino-acid biosynthesis; L-methionine biosynthesis via de novo pathway; L-methionine from L-homocysteine (MetE route): step 1/1. Its function is as follows. Catalyzes the transfer of a methyl group from 5-methyltetrahydrofolate to homocysteine resulting in methionine formation. This Campylobacter jejuni subsp. jejuni serotype O:23/36 (strain 81-176) protein is 5-methyltetrahydropteroyltriglutamate--homocysteine methyltransferase.